Reading from the N-terminus, the 210-residue chain is Probable peroxygenase 7 (210 aa).

The disordered stretch occupies residues 1–24 (MSHQTVALASKAKSPKPKRGKLDK). An EF-hand domain is found at 25 to 60 (EKMTALEKHVSFFDRNKDGTVYPWETYQGFRALGTG). A heme-binding site is contributed by His33. Asp38, Asn40, Asp42, Thr44, and Glu49 together coordinate Ca(2+). The Proline-knot motif lies at 81–90 (PGKGFSPLFP). Ser188 bears the Phosphoserine mark.

Belongs to the caleosin family. In terms of assembly, homodimer. Requires heme b as cofactor. Ca(2+) serves as cofactor. In terms of tissue distribution, expressed in pollen coat.

Its subcellular location is the secreted. The catalysed reaction is RH + ROOH = ROH + ROH.. Probable calcium-binding peroxygenase. May be involved in pollination. The polypeptide is Probable peroxygenase 7 (PXG7) (Arabidopsis thaliana (Mouse-ear cress)).